Here is a 223-residue protein sequence, read N- to C-terminus: 2-C-methyl-D-erythritol 4-phosphate cytidylyltransferase (223 aa).

The protein belongs to the IspD/TarI cytidylyltransferase family. IspD subfamily.

It carries out the reaction 2-C-methyl-D-erythritol 4-phosphate + CTP + H(+) = 4-CDP-2-C-methyl-D-erythritol + diphosphate. The protein operates within isoprenoid biosynthesis; isopentenyl diphosphate biosynthesis via DXP pathway; isopentenyl diphosphate from 1-deoxy-D-xylulose 5-phosphate: step 2/6. Its function is as follows. Catalyzes the formation of 4-diphosphocytidyl-2-C-methyl-D-erythritol from CTP and 2-C-methyl-D-erythritol 4-phosphate (MEP). In Prochlorococcus marinus (strain MIT 9301), this protein is 2-C-methyl-D-erythritol 4-phosphate cytidylyltransferase.